A 99-amino-acid polypeptide reads, in one-letter code: NADH-quinone oxidoreductase subunit K (99 aa).

3 helical membrane-spanning segments follow: residues 3-23 (PENY…GVLL), 28-48 (IVVF…FVTF), and 62-82 (FFTM…IMII).

The protein belongs to the complex I subunit 4L family. In terms of assembly, NDH-1 is composed of 14 different subunits. Subunits NuoA, H, J, K, L, M, N constitute the membrane sector of the complex.

It localises to the cell membrane. It carries out the reaction a quinone + NADH + 5 H(+)(in) = a quinol + NAD(+) + 4 H(+)(out). In terms of biological role, NDH-1 shuttles electrons from NADH, via FMN and iron-sulfur (Fe-S) centers, to quinones in the respiratory chain. The immediate electron acceptor for the enzyme in this species is believed to be a menaquinone. Couples the redox reaction to proton translocation (for every two electrons transferred, four hydrogen ions are translocated across the cytoplasmic membrane), and thus conserves the redox energy in a proton gradient. This chain is NADH-quinone oxidoreductase subunit K, found in Rhodococcus erythropolis (strain PR4 / NBRC 100887).